An 85-amino-acid polypeptide reads, in one-letter code: Large ribosomal subunit protein bL27 (85 aa).

A disordered region spans residues 1-20; sequence MAHKKAGGSTRNGRDSEAKR.

The protein belongs to the bacterial ribosomal protein bL27 family.

This is Large ribosomal subunit protein bL27 from Escherichia coli O139:H28 (strain E24377A / ETEC).